The sequence spans 481 residues: UDP-glucose 6-dehydrogenase (481 aa).

NAD(+)-binding positions include 16–21 (GAGYVG), Asp-41, Lys-46, 94–98 (VNTPT), 135–136 (ST), and Glu-172. Substrate-binding positions include 168-172 (EFLAE), 227-231 (KLVAN), Arg-267, and 274-280 (QASVGFG). Residue Cys-283 is the Nucleophile of the active site. 283-286 (CFQK) contacts NAD(+). Substrate is bound at residue 345 to 346 (FK). Arg-353 contributes to the NAD(+) binding site. Residue Arg-447 coordinates substrate.

The protein belongs to the UDP-glucose/GDP-mannose dehydrogenase family. Expressed in the vulva and in oocytes.

The catalysed reaction is UDP-alpha-D-glucose + 2 NAD(+) + H2O = UDP-alpha-D-glucuronate + 2 NADH + 3 H(+). Its pathway is nucleotide-sugar biosynthesis; UDP-alpha-D-glucuronate biosynthesis; UDP-alpha-D-glucuronate from UDP-alpha-D-glucose: step 1/1. Involved in the biosynthesis of glycosaminoglycans; hyaluronan, chondroitin sulfate, and heparan sulfate. In Caenorhabditis elegans, this protein is UDP-glucose 6-dehydrogenase (sqv-4).